The sequence spans 518 residues: Xylose import ATP-binding protein XylG (518 aa).

ABC transporter domains follow at residues 6–245 (LQMN…VGRE) and 262–507 (FEAR…LSQP). 38 to 45 (GENGAGKS) is a binding site for ATP.

The protein belongs to the ABC transporter superfamily. Xylose importer (TC 3.A.1.2.4) family. In terms of assembly, the complex is composed of two ATP-binding proteins (XylG), two transmembrane proteins (XylH) and a solute-binding protein (XylF).

It is found in the cell inner membrane. It catalyses the reaction D-xylose(out) + ATP + H2O = D-xylose(in) + ADP + phosphate + H(+). In terms of biological role, part of the ABC transporter complex XylFGH involved in xylose import. Responsible for energy coupling to the transport system. The sequence is that of Xylose import ATP-binding protein XylG from Pseudomonas fluorescens (strain Pf0-1).